The sequence spans 203 residues: Glycerol-3-phosphate acyltransferase (203 aa).

The next 4 membrane-spanning stretches (helical) occupy residues 7–27 (TLLMILAAYLAGSISSAVLVC), 82–102 (AVSLGLIAIAACLGHIYPVFF), 118–138 (APIGDDLAICLMASWVVLLLI), and 141–161 (YSSLAAILTALLAPLYTWWLD).

The protein belongs to the PlsY family. Probably interacts with PlsX.

The protein resides in the cell inner membrane. The catalysed reaction is an acyl phosphate + sn-glycerol 3-phosphate = a 1-acyl-sn-glycero-3-phosphate + phosphate. It functions in the pathway lipid metabolism; phospholipid metabolism. In terms of biological role, catalyzes the transfer of an acyl group from acyl-phosphate (acyl-PO(4)) to glycerol-3-phosphate (G3P) to form lysophosphatidic acid (LPA). This enzyme utilizes acyl-phosphate as fatty acyl donor, but not acyl-CoA or acyl-ACP. This chain is Glycerol-3-phosphate acyltransferase, found in Shewanella baltica (strain OS223).